Consider the following 183-residue polypeptide: Putative lipoprotein LpqE (183 aa).

The signal sequence occupies residues 1 to 30 (MSRFKISLPALATRVAVLGFLTLMASVLGG). Cysteine 31 carries the N-palmitoyl cysteine lipid modification. The S-diacylglycerol cysteine moiety is linked to residue cysteine 31.

It is found in the cell membrane. This is Putative lipoprotein LpqE (lpqE) from Mycobacterium leprae (strain TN).